Reading from the N-terminus, the 424-residue chain is S-adenosylmethionine synthase (424 aa).

Residue H16 coordinates ATP. D18 is a binding site for Mg(2+). E44 serves as a coordination point for K(+). 2 residues coordinate L-methionine: E57 and Q100. The interval 100-110 (QSPDIAQGVNT) is flexible loop. ATP contacts are provided by residues 175 to 177 (DGK), 251 to 252 (KF), D260, 266 to 267 (RK), A283, and K287. D260 contacts L-methionine. An L-methionine-binding site is contributed by K291.

This sequence belongs to the AdoMet synthase family. Homotetramer; dimer of dimers. Mg(2+) is required as a cofactor. The cofactor is K(+).

Its subcellular location is the cytoplasm. It catalyses the reaction L-methionine + ATP + H2O = S-adenosyl-L-methionine + phosphate + diphosphate. Its pathway is amino-acid biosynthesis; S-adenosyl-L-methionine biosynthesis; S-adenosyl-L-methionine from L-methionine: step 1/1. Functionally, catalyzes the formation of S-adenosylmethionine (AdoMet) from methionine and ATP. The overall synthetic reaction is composed of two sequential steps, AdoMet formation and the subsequent tripolyphosphate hydrolysis which occurs prior to release of AdoMet from the enzyme. In Nostoc punctiforme (strain ATCC 29133 / PCC 73102), this protein is S-adenosylmethionine synthase.